Here is a 504-residue protein sequence, read N- to C-terminus: Maturase K (504 aa).

The protein belongs to the intron maturase 2 family. MatK subfamily.

The protein localises to the plastid. It localises to the chloroplast. In terms of biological role, usually encoded in the trnK tRNA gene intron. Probably assists in splicing its own and other chloroplast group II introns. The chain is Maturase K from Betula papyrifera (Paper birch).